Reading from the N-terminus, the 206-residue chain is Guanylate kinase (206 aa).

The Guanylate kinase-like domain maps to 6-184 (GTLYIISAPS…ALGDLKAIFR (179 aa)). Residue 13-20 (APSGAGKS) coordinates ATP.

This sequence belongs to the guanylate kinase family.

It is found in the cytoplasm. It catalyses the reaction GMP + ATP = GDP + ADP. In terms of biological role, essential for recycling GMP and indirectly, cGMP. This chain is Guanylate kinase, found in Pseudomonas fluorescens (strain ATCC BAA-477 / NRRL B-23932 / Pf-5).